A 521-amino-acid polypeptide reads, in one-letter code: Occludin (521 aa).

The interval 1–20 (MSVRPFESPPPYRPDEFKPN) is disordered. At 1–66 (MSVRPFESPP…KWTSPPGVIR (66 aa)) the chain is on the cytoplasmic side. One can recognise an MARVEL domain in the interval 60–267 (SPPGVIRILS…IIFFAVKTRR (208 aa)). A helical membrane pass occupies residues 67–89 (ILSMLIIVMCIAIFACVASTLAW). Residues 90–133 (DRGYGTGLFGGSLNYPYSGFGYGGGYGGGYGGYGYGYGGYTDPR) lie on the Extracellular side of the membrane. Residues 134–158 (AAKGFLLAMAAFCFIASLVIFVTSV) form a helical membrane-spanning segment. Topologically, residues 159–168 (IRSGMSRTRR) are cytoplasmic. The chain crosses the membrane as a helical span at residues 169–193 (YYLIVIIVSAILGIMVFIATIVYIM). Residues 194-241 (GVNPTAQASGSMYGSQIYMICNQFYTPGGTGLYVDQYLYHYCVVDPQE) are Extracellular-facing. Cys214 and Cys235 are joined by a disulfide. The chain crosses the membrane as a helical span at residues 242 to 263 (AIAIVLGFMIIVAFALIIFFAV). The Cytoplasmic portion of the chain corresponds to 264–521 (KTRRKMDRYD…MVGDYDRRKP (258 aa)). Ser300 bears the Phosphoserine mark. The interval 300–329 (SAGTQDMPPPPSDYAERVDSPMAYSSNGKV) is disordered. Thr303 is modified (phosphothreonine). A phosphoserine mark is found at Ser311 and Ser319. Ser338 is subject to Phosphoserine; by PKC; in vitro. Phosphoserine is present on Ser358. The segment at 361-405 (DFRQPRYSSNGNLETPSKRAPTKGKAGKGKRTDPDHYETDYTTGG) is disordered. Over residues 366-375 (RYSSNGNLET) the composition is skewed to polar residues. Tyr367 carries the phosphotyrosine modification. Phosphoserine is present on residues Ser368 and Ser369. A compositionally biased stretch (basic residues) spans 380–389 (APTKGKAGKG). Residues 390-399 (KRTDPDHYET) are compositionally biased toward basic and acidic residues. Tyr397 and Tyr401 each carry phosphotyrosine. Thr402 is subject to Phosphothreonine; by PKC/PRKCH. Thr403 is subject to Phosphothreonine. Phosphoserine is present on Ser407. Residues 413–521 (EDWVREYPPI…MVGDYDRRKP (109 aa)) enclose the OCEL domain. Residues 424-488 (SDQQRQLYKR…EYNRLKQVKG (65 aa)) are a coiled coil. Ser489 bears the Phosphoserine mark.

This sequence belongs to the ELL/occludin family. In terms of assembly, interacts with TJP1/ZO1. Interacts with VAPA. Interacts with CLDN1, CLDN6, CLDN9, CLDN11, CLDN12 and CLDN17. Interacts with PLSCR1. Interacts with LSR, ILDR1 and ILDR2. Interacts with TJP2/ZO2. In terms of processing, dephosphorylated by PTPRJ. May be phosphorylated by PKC during translocation to cell-cell contacts. As to expression, localized at tight junctions of both epithelial and endothelial cells. Highly expressed in the testis, kidney, lung, liver and brain. Not detected in skeletal muscle, spleen and heart.

Its subcellular location is the cell membrane. It localises to the cell junction. The protein resides in the tight junction. Functionally, may play a role in the formation and regulation of the tight junction (TJ) paracellular permeability barrier. In Mus musculus (Mouse), this protein is Occludin (Ocln).